The primary structure comprises 71 residues: U3-agatoxin-Ao1a (71 aa).

Residues 1–20 (MKAVIFFCLLSVMVFTVIEA) form the signal peptide. Positions 21 to 33 (VKEEGTKPAEAAR) are excised as a propeptide. 4 disulfide bridges follow: cysteine 35-cysteine 51, cysteine 42-cysteine 56, cysteine 50-cysteine 66, and cysteine 58-cysteine 64. Serine 70 carries the post-translational modification Serine amide.

Belongs to the neurotoxin 07 (Beta/delta-agtx) family. 01 (aga-2) subfamily. Expressed by the venom gland.

Its subcellular location is the secreted. Functionally, insecticidal neurotoxin that modulates the insect Nav channel (DmNaV1/tipE (para/tipE)) in a unique manner, with both the activation and inactivation processes being affected. The voltage dependence of activation is shifted toward more hyperpolarized potentials (analogous to site 4 toxins) and a non-inactivating persistent sodium current is induced (site 3-like action). Interestingly, both effects take place in a voltage-dependent manner, producing a bell-shaped curve between -80 and 0 mV. Compared to beta/delta-agatoxin-1 to -3, this toxin appears to affect the insect sodium channel only weakly. The protein is U3-agatoxin-Ao1a of Agelena orientalis (Funnel-web spider).